Here is a 152-residue protein sequence, read N- to C-terminus: Peptide deformylase (152 aa).

2 residues coordinate Fe cation: Cys-88 and His-130. Glu-131 is an active-site residue. His-134 serves as a coordination point for Fe cation.

It belongs to the polypeptide deformylase family. Fe(2+) serves as cofactor.

The catalysed reaction is N-terminal N-formyl-L-methionyl-[peptide] + H2O = N-terminal L-methionyl-[peptide] + formate. Functionally, removes the formyl group from the N-terminal Met of newly synthesized proteins. Requires at least a dipeptide for an efficient rate of reaction. N-terminal L-methionine is a prerequisite for activity but the enzyme has broad specificity at other positions. The protein is Peptide deformylase of Carboxydothermus hydrogenoformans (strain ATCC BAA-161 / DSM 6008 / Z-2901).